The chain runs to 228 residues: Ribose-5-phosphate isomerase A (228 aa).

Residues 32-35 (TGST), 85-88 (DGAD), and 98-101 (KGGG) contribute to the substrate site. Catalysis depends on E107, which acts as the Proton acceptor. A substrate-binding site is contributed by K125.

It belongs to the ribose 5-phosphate isomerase family. As to quaternary structure, homodimer.

The enzyme catalyses aldehydo-D-ribose 5-phosphate = D-ribulose 5-phosphate. It functions in the pathway carbohydrate degradation; pentose phosphate pathway; D-ribose 5-phosphate from D-ribulose 5-phosphate (non-oxidative stage): step 1/1. In terms of biological role, catalyzes the reversible conversion of ribose-5-phosphate to ribulose 5-phosphate. The chain is Ribose-5-phosphate isomerase A from Ralstonia pickettii (strain 12J).